Consider the following 299-residue polypeptide: Pyridoxal 5'-phosphate synthase subunit PdxS (299 aa).

D24 provides a ligand contact to D-ribose 5-phosphate. The Schiff-base intermediate with D-ribose 5-phosphate role is filled by K81. A D-ribose 5-phosphate-binding site is contributed by G153. R165 contacts D-glyceraldehyde 3-phosphate. Residues G219 and 240–241 (GS) each bind D-ribose 5-phosphate.

The protein belongs to the PdxS/SNZ family. In the presence of PdxT, forms a dodecamer of heterodimers.

The enzyme catalyses aldehydo-D-ribose 5-phosphate + D-glyceraldehyde 3-phosphate + L-glutamine = pyridoxal 5'-phosphate + L-glutamate + phosphate + 3 H2O + H(+). The protein operates within cofactor biosynthesis; pyridoxal 5'-phosphate biosynthesis. Catalyzes the formation of pyridoxal 5'-phosphate from ribose 5-phosphate (RBP), glyceraldehyde 3-phosphate (G3P) and ammonia. The ammonia is provided by the PdxT subunit. Can also use ribulose 5-phosphate and dihydroxyacetone phosphate as substrates, resulting from enzyme-catalyzed isomerization of RBP and G3P, respectively. In Methanococcus vannielii (strain ATCC 35089 / DSM 1224 / JCM 13029 / OCM 148 / SB), this protein is Pyridoxal 5'-phosphate synthase subunit PdxS.